The chain runs to 364 residues: Lysophosphatidic acid receptor 1 (364 aa).

Topologically, residues 1 to 50 (MAAAFTSSPVVSQPQFTAMNEQQCFSNESIAFFYNRSGKYLATEWNTVTK) are extracellular. 2 disulfide bridges follow: Cys24–Cys190 and Cys188–Cys195. Asn27 and Asn35 each carry an N-linked (GlcNAc...) asparagine glycan. Lys39 is an a 1-acyl-sn-glycero-3-phosphate binding site. Residues 51–75 (LVMGLGITVCIFIMLANLLVMVAIY) traverse the membrane as a helical segment. The Cytoplasmic segment spans residues 76 to 83 (VNRRFHFP). Residues 84-107 (IYYLMANLAAADFFAGLAYFYLMF) traverse the membrane as a helical segment. Residues 108–121 (NTGPNTRRLTVSTW) are Extracellular-facing. The chain crosses the membrane as a helical span at residues 122–144 (LLRQGLIDTSLTVSVANLLAIAI). Position 124–129 (124–129 (RQGLID)) interacts with a 1-acyl-sn-glycero-3-phosphate. Residues 145 to 163 (ERHITVFRMQLHARMSNRR) are Cytoplasmic-facing. The helical transmembrane segment at 164 to 184 (VVVVIVVIWTMAIVMGAIPSV) threads the bilayer. At 185-204 (GWNCICDIENCSNMAPLYSD) the chain is on the extracellular side. The helical transmembrane segment at 205–225 (SYLVFWAIFNLVTFVVMVVLY) threads the bilayer. Residue Trp210 participates in a 1-acyl-sn-glycero-3-phosphate binding. Residues 226-255 (AHIFGYVRQRTMRMSRHSSGPRRNRDTMMS) are Cytoplasmic-facing. The chain crosses the membrane as a helical span at residues 256–280 (LLKTVVIVLGAFIICWTPGLVLLLL). The Extracellular segment spans residues 281 to 294 (DVCCPQCDVLAYEK). The cysteines at positions 284 and 287 are disulfide-linked. Residues 295–315 (FFLLLAEFNSAMNPIIYSYRD) traverse the membrane as a helical segment. At 316-364 (KEMSATFRQILCCQRSENTSGPTEGSDRSASSLNHTILAGVHSNDHSVV) the chain is on the cytoplasmic side. Ser341 is modified (phosphoserine). Thr351 is modified (phosphothreonine).

This sequence belongs to the G-protein coupled receptor 1 family. In terms of assembly, interacts with RALA and GRK2. Interacts with GNAQ and GNA13. Interacts with CD14; the interaction is enhanced by exposure to bacterial lipopolysaccharide (LPS). Post-translationally, N-glycosylated.

Its subcellular location is the cell surface. The protein resides in the cell membrane. It localises to the endosome. Functionally, receptor for lysophosphatidic acid (LPA). Plays a role in the reorganization of the actin cytoskeleton, cell migration, differentiation and proliferation, and thereby contributes to the responses to tissue damage and infectious agents. Activates downstream signaling cascades via the G(i)/G(o), G(12)/G(13), and G(q) families of heteromeric G proteins. Signaling inhibits adenylyl cyclase activity and decreases cellular cAMP levels. Signaling triggers an increase of cytoplasmic Ca(2+) levels. Activates RALA; this leads to the activation of phospholipase C (PLC) and the formation of inositol 1,4,5-trisphosphate. Signaling mediates activation of down-stream MAP kinases. Contributes to the regulation of cell shape. Promotes Rho-dependent reorganization of the actin cytoskeleton in neuronal cells and neurite retraction. Promotes the activation of Rho and the formation of actin stress fibers. Promotes formation of lamellipodia at the leading edge of migrating cells via activation of RAC1. Through its function as LPA receptor, plays a role in chemotaxis and cell migration, including responses to injury and wounding. Plays a role in triggering inflammation in response to bacterial lipopolysaccharide (LPS) via its interaction with CD14. Promotes cell proliferation in response to LPA. Inhibits the intracellular ciliogenesis pathway in response to LPA and through AKT1 activation. Required for normal skeleton development. May play a role in osteoblast differentiation. Required for normal brain development. Required for normal proliferation, survival and maturation of newly formed neurons in the adult dentate gyrus. Plays a role in pain perception and in the initiation of neuropathic pain. The protein is Lysophosphatidic acid receptor 1 (LPAR1) of Bos taurus (Bovine).